The chain runs to 58 residues: Photosystem II reaction center protein K (58 aa).

Positions 1 to 21 (MTVSYSIYLENSLHFGDALLA) are excised as a propeptide. Residues 29–49 (IFDPIVDVMPVIPVFFLLLAF) traverse the membrane as a helical segment.

This sequence belongs to the PsbK family. As to quaternary structure, PSII is composed of 1 copy each of membrane proteins PsbA, PsbB, PsbC, PsbD, PsbE, PsbF, PsbH, PsbI, PsbJ, PsbK, PsbL, PsbM, PsbT, PsbX, PsbY, PsbZ, Psb30/Ycf12, at least 3 peripheral proteins of the oxygen-evolving complex and a large number of cofactors. It forms dimeric complexes.

It localises to the plastid. It is found in the chloroplast thylakoid membrane. Its function is as follows. One of the components of the core complex of photosystem II (PSII). PSII is a light-driven water:plastoquinone oxidoreductase that uses light energy to abstract electrons from H(2)O, generating O(2) and a proton gradient subsequently used for ATP formation. It consists of a core antenna complex that captures photons, and an electron transfer chain that converts photonic excitation into a charge separation. This chain is Photosystem II reaction center protein K, found in Adiantum capillus-veneris (Maidenhair fern).